We begin with the raw amino-acid sequence, 627 residues long: Protein fem-1 homolog B (627 aa).

ANK repeat units lie at residues 45–74, 87–116, 120–149, 153–182, 186–215, and 218–248; these read QRSTPLIIAARNGHTKVVRLLLEHYRVQTQ, DGATALWCAAGAGHFEVVKLLVSHGANVNH, TNSTPLRAACFDGRLDIVKYLVENNANISI, YDNTCLMIAAYKGHTDVVRYLLEQHADPNA, CGATALHFAAEAGHLEIVRELVKWKAAMMV, and HGMTPLKVAAESCKADVVELLLAHAGCNRRS. The stretch at 344 to 377 is one TPR repeat; sequence SHPIIYRGAVYADNMEFEQCIKLWLHALHLRQKG. ANK repeat units lie at residues 483–527 and 531–568; these read DGST…DVNA and EGNSPLHLIVQYHRPISDFLTLHSIIISLVEAGAHTDM.

Belongs to the fem-1 family. As to quaternary structure, component of a CRL2 E3 ubiquitin-protein ligase complex, also named ECS (Elongin BC-CUL2/5-SOCS-box protein) complex.

It is found in the cytoplasm. The protein localises to the nucleus. Its pathway is protein modification; protein ubiquitination. Functionally, substrate-recognition component of a Cul2-RING (CRL2) E3 ubiquitin-protein ligase complex of the DesCEND (destruction via C-end degrons) pathway, which recognizes a C-degron located at the extreme C terminus of target proteins, leading to their ubiquitination and degradation. The C-degron recognized by the DesCEND pathway is usually a motif of less than ten residues and can be present in full-length proteins, truncated proteins or proteolytically cleaved forms. The CRL2(FEM1B) complex specifically recognizes proteins ending with -Gly-Leu-Asp-Arg, leading to their ubiquitination and degradation. This is Protein fem-1 homolog B from Gallus gallus (Chicken).